We begin with the raw amino-acid sequence, 112 residues long: UPF0060 membrane protein Arth_4238 (112 aa).

The next 4 helical transmembrane spans lie at 7–27 (ILLF…VWQA), 33–53 (EWWW…AATL), 62–82 (ILAA…MVFD), and 88–108 (RWDI…MFAP).

It belongs to the UPF0060 family.

The protein resides in the cell membrane. In Arthrobacter sp. (strain FB24), this protein is UPF0060 membrane protein Arth_4238.